Here is a 502-residue protein sequence, read N- to C-terminus: MRIGFDHEKYLEEQSKYILERVNNYDKLYLEFGGKLLFDLHAKRVLPGFDENAKIKLLHKLKEKVEIIICLYAGDIERNKIRGDFGITYDVDVLRLIDDLRGYDLEVNSVVITRYSGQPATNIFINKLERRGIKVYKHEATKGYPTDVDTIVSDEGYGKNPYIETTKPIVVVTAPGPGSGKLATCLSQLYHEYKRGNVAGYSKFETFPVWNVPLKHPLNIAYESATVDLKDVNMIDSFHFDAYNKVAVNYNRDIESFPVLKRIIEKITGEESVYKSPTDMGVNRVGFGIVDDEIVKEASKQEIIRRAFKTACEYKKGYVDKETFHRAKLIMEEMNLKEEDRKVVIPAREYAAKLKERANKSETCTVVALELEDGTILTGRSSELMDGTAAVILNAVKHYANISDEIHLISPVILEPIINLKAKTLGSKRTALSCEEVLIALSICAATNPTAQVAMGKLPMLKGCQAHSTTILSTNEEQTFRKLGIDVTCDPEYISESLYYNN.

Belongs to the UPF0371 family.

This is UPF0371 protein CLM_0396 from Clostridium botulinum (strain Kyoto / Type A2).